The chain runs to 466 residues: Acetylcholine-gated chloride channel subunit acc-1 (466 aa).

The signal sequence occupies residues 1-24; the sequence is MSHPGWIMVSFLTELLSQSSKGIA. The Extracellular portion of the chain corresponds to 25 to 242; that stretch reads QSLDNCANDT…FVFERRYGWY (218 aa). 3 N-linked (GlcNAc...) asparagine glycosylation sites follow: Asn32, Asn102, and Asn143. Cysteines 158 and 172 form a disulfide. Residue Asn211 is glycosylated (N-linked (GlcNAc...) asparagine). A helical membrane pass occupies residues 243–263; that stretch reads VLQGYIPTMVTIVISWISFYL. Topologically, residues 264–272 are cytoplasmic; the sequence is GPRAIPART. Residues 273 to 290 form a helical membrane-spanning segment; sequence MLGVNSLLAMTFQFGNII. At 291–304 the chain is on the extracellular side; that stretch reads RNLPRVSYVKAIDV. A helical membrane pass occupies residues 305 to 325; sequence WMLSGMLFIFLSLLELAVVGF. Residues 326-427 lie on the Cytoplasmic side of the membrane; it reads MSRNEGLPPK…MRELRPETVD (102 aa). The interval 333–352 is disordered; that stretch reads PPKVKKRKRQEDDDEGFSWK. Residues 428 to 448 form a helical membrane-spanning segment; that stretch reads FYSAIFFPTAYMLFNISYWSF. At 449 to 466 the chain is on the extracellular side; it reads YLTSLSEYFDEDVNIDQP.

It belongs to the ligand-gated ion channel (TC 1.A.9) family. As to quaternary structure, homopentamer (in vitro). Forms heteropentamers composed of acc-1 and acc-4 or acc-1 and acc-3. Both homopentamers and heteropentamers form functional ion channels. As to expression, expressed in a subset of cholinergic motor neurons including cholinergic motor neurons in the ventral cord, the retrovesicular ganglion and in head neurons such as the SMD, RMD motor neurons, the AVA and AVE command interneurons and the SAA neurons. Also expressed in a small number of glutamatergic neurons including the pharyngeal neurons MI and M3, the PLM neurons and a pair of neurons in the lateral ganglion.

The protein resides in the cell membrane. Acetylcholine-gated chloride channel subunit. Forms functional homopentameric (in vitro) and functional heteropentameric ion channels with acc-3 and acc-4 ion channel subunits. Currents in channels are triggered in response to acetylcholine, but not in response to GABA, glutamate, glycine, histamine or dopamine. The chain is Acetylcholine-gated chloride channel subunit acc-1 from Caenorhabditis elegans.